We begin with the raw amino-acid sequence, 388 residues long: Carbamoyl phosphate synthase small chain (388 aa).

The interval 1–192 is CPSase; that stretch reads MPLSDAMPAL…FNPDGTVKNG (192 aa). L-glutamine is bound by residues S51, G244, and G246. Positions 196 to 382 constitute a Glutamine amidotransferase type-1 domain; sequence TVVALDFGVK…VHQMRTTKQA (187 aa). C272 (nucleophile) is an active-site residue. Positions 273, 276, 312, and 315 each coordinate L-glutamine. Catalysis depends on residues H355 and E357.

Belongs to the CarA family. Composed of two chains; the small (or glutamine) chain promotes the hydrolysis of glutamine to ammonia, which is used by the large (or ammonia) chain to synthesize carbamoyl phosphate. Tetramer of heterodimers (alpha,beta)4.

The catalysed reaction is hydrogencarbonate + L-glutamine + 2 ATP + H2O = carbamoyl phosphate + L-glutamate + 2 ADP + phosphate + 2 H(+). It carries out the reaction L-glutamine + H2O = L-glutamate + NH4(+). It participates in amino-acid biosynthesis; L-arginine biosynthesis; carbamoyl phosphate from bicarbonate: step 1/1. It functions in the pathway pyrimidine metabolism; UMP biosynthesis via de novo pathway; (S)-dihydroorotate from bicarbonate: step 1/3. In terms of biological role, small subunit of the glutamine-dependent carbamoyl phosphate synthetase (CPSase). CPSase catalyzes the formation of carbamoyl phosphate from the ammonia moiety of glutamine, carbonate, and phosphate donated by ATP, constituting the first step of 2 biosynthetic pathways, one leading to arginine and/or urea and the other to pyrimidine nucleotides. The small subunit (glutamine amidotransferase) binds and cleaves glutamine to supply the large subunit with the substrate ammonia. The sequence is that of Carbamoyl phosphate synthase small chain from Nostoc sp. (strain PCC 7120 / SAG 25.82 / UTEX 2576).